Reading from the N-terminus, the 1680-residue chain is SWI/SNF chromatin-remodeling complex subunit snf22 (1680 aa).

4 disordered regions span residues Gln-61–Ser-135, Asn-203–Ser-258, Arg-274–Tyr-300, and Tyr-367–Thr-427. Polar residues predominate over residues Gln-62–Asn-91. Low complexity-rich tracts occupy residues Gly-118–Pro-127 and Ser-222–Ser-233. Residues Thr-234–Ala-245 are compositionally biased toward polar residues. 3 stretches are compositionally biased toward low complexity: residues Ser-247–Ser-258, Pro-282–Pro-299, and Pro-374–Pro-392. Polar residues predominate over residues Pro-406–Val-419. The region spanning Lys-429–Gly-465 is the QLQ domain. Residues Ser-477–Ser-489 are compositionally biased toward polar residues. Residues Ser-477 to Ala-499 form a disordered region. The span at Val-490–Ala-499 shows a compositional bias: basic and acidic residues. An HSA domain is found at Gln-704 to Ala-776. Residues Ser-817 to Ala-832 are compositionally biased toward polar residues. Residues Ser-817 to Ala-836 form a disordered region. Positions Leu-881 to Lys-1046 constitute a Helicase ATP-binding domain. An ATP-binding site is contributed by Asp-894 to Thr-901. Residues Asp-996–His-999 carry the DEGH box motif. A Helicase C-terminal domain is found at Leu-1191 to Leu-1354. The tract at residues Thr-1466–Pro-1511 is disordered. The span at Pro-1476–Thr-1486 shows a compositional bias: basic residues. Over residues Ser-1488–Leu-1502 the composition is skewed to low complexity. Positions Tyr-1513–Leu-1623 constitute a Bromo domain.

It belongs to the SNF2/RAD54 helicase family. In terms of assembly, component of the SWI/SNF global transcription activator complex composed of at least arp9, arp42, snf5, snf22, snf30, sbf59, sol1, ssr1, ssr2, ssr3, ssr4 and tfg3.

The protein localises to the nucleus. Helicase. Component of the SWI/SNF complex, an ATP-dependent chromatin remodeling complex, required for the positive and negative regulation of gene expression of a large number of genes. It changes chromatin structure by altering DNA-histone contacts within a nucleosome, leading eventually to a change in nucleosome position, thus facilitating or repressing binding of gene-specific transcription factors. The protein is SWI/SNF chromatin-remodeling complex subunit snf22 (snf22) of Schizosaccharomyces pombe (strain 972 / ATCC 24843) (Fission yeast).